We begin with the raw amino-acid sequence, 298 residues long: Inosose dehydratase (298 aa).

The protein belongs to the IolE/MocC family. It depends on glutathione as a cofactor. Requires Co(2+) as cofactor. The cofactor is Mn(2+).

The enzyme catalyses scyllo-inosose = 3D-3,5/4-trihydroxycyclohexane-1,2-dione + H2O. Functionally, catalyzes the dehydration of inosose (2-keto-myo-inositol, 2KMI or 2,4,6/3,5-pentahydroxycyclohexanone) to 3D-(3,5/4)-trihydroxycyclohexane-1,2-dione (D-2,3-diketo-4-deoxy-epi-inositol). The polypeptide is Inosose dehydratase (Erwinia tasmaniensis (strain DSM 17950 / CFBP 7177 / CIP 109463 / NCPPB 4357 / Et1/99)).